The sequence spans 357 residues: NADH-quinone oxidoreductase subunit H (357 aa).

8 helical membrane passes run valine 18–leucine 38, valine 92–valine 112, leucine 127–alanine 147, valine 165–leucine 185, phenylalanine 206–valine 226, isoleucine 268–isoleucine 288, isoleucine 294–phenylalanine 314, and leucine 329–methionine 349.

It belongs to the complex I subunit 1 family. In terms of assembly, NDH-1 is composed of 14 different subunits. Subunits NuoA, H, J, K, L, M, N constitute the membrane sector of the complex.

It localises to the cell inner membrane. The enzyme catalyses a quinone + NADH + 5 H(+)(in) = a quinol + NAD(+) + 4 H(+)(out). Functionally, NDH-1 shuttles electrons from NADH, via FMN and iron-sulfur (Fe-S) centers, to quinones in the respiratory chain. The immediate electron acceptor for the enzyme in this species is believed to be ubiquinone. Couples the redox reaction to proton translocation (for every two electrons transferred, four hydrogen ions are translocated across the cytoplasmic membrane), and thus conserves the redox energy in a proton gradient. This subunit may bind ubiquinone. The chain is NADH-quinone oxidoreductase subunit H from Bordetella bronchiseptica (strain ATCC BAA-588 / NCTC 13252 / RB50) (Alcaligenes bronchisepticus).